Here is a 407-residue protein sequence, read N- to C-terminus: Peptidase T (407 aa).

Residue histidine 77 participates in Zn(2+) binding. Aspartate 79 is a catalytic residue. Aspartate 140 serves as a coordination point for Zn(2+). The Proton acceptor role is filled by glutamate 174. Zn(2+) contacts are provided by glutamate 175, aspartate 197, and histidine 379.

Belongs to the peptidase M20B family. Zn(2+) is required as a cofactor.

It is found in the cytoplasm. The enzyme catalyses Release of the N-terminal residue from a tripeptide.. Its function is as follows. Cleaves the N-terminal amino acid of tripeptides. This Bacteroides fragilis (strain YCH46) protein is Peptidase T.